The chain runs to 433 residues: MFSKNRNINQFQYAMESQTEFIMYIPDAINSLIHLLDNGSIIPECFKPNLTDINGFVGNLRHLPNKITSIETGLIRQVYFHGDIMIAGSVMYLKDIETLEFICKNIGFRLSLFVEWLYDNKSLHLLESIALSFPSNDVSYLLESVMQYRQNDTTKLIFNMFPSEYNKEIILRNAVITNNLEMLEFAIEKGAILSETDHLIVQSIRTSNLDLIKYIFSHIDLSKLIKLTDTVYYIYANAVYHYSHDVIVFLIESCIDYPDDLLFKLFASNQDCHETIDYIINLKYPDQNELNNILIHICRHSSQSEKYKSVYNSVEKLIELGADFTIDNYQVVIDILKSYFPNVVEIFVKNGLNPNVNPNILKTSIYCCNNFDITKYLIDNGADIHSDPSLIKTAITSGNLKTATFLMDNGAICDESDCEIITKNRHIFDNNFS.

4 ANK repeats span residues 166–195 (NKEI…ILSE), 197–224 (DHLI…LSKL), 356–386 (VNPN…DIHS), and 388–415 (PSLI…ICDE).

This chain is Putative ankyrin repeat protein R578, found in Acanthamoeba polyphaga mimivirus (APMV).